A 239-amino-acid polypeptide reads, in one-letter code: Lactate utilization protein A (239 aa).

The protein belongs to the LutA/YkgE family.

Its function is as follows. Is involved in L-lactate degradation and allows cells to grow with lactate as the sole carbon source. This chain is Lactate utilization protein A, found in Bacillus cereus (strain G9842).